The chain runs to 533 residues: T-complex protein 1 subunit delta (533 aa).

A disordered region spans residues 1–24 (MVVKPAARGMKPQGQAYKDKSKPA).

It belongs to the TCP-1 chaperonin family. Heterooligomeric complex of about 850 to 900 kDa that forms two stacked rings, 12 to 16 nm in diameter.

Its subcellular location is the cytoplasm. Molecular chaperone; assists the folding of proteins upon ATP hydrolysis. Known to play a role, in vitro, in the folding of actin and tubulin. The polypeptide is T-complex protein 1 subunit delta (Ochlerotatus triseriatus (Eastern treehole mosquito)).